The primary structure comprises 533 residues: Lysophosphatidylcholine acyltransferase (533 aa).

Residues 1 to 79 (MTTSTIKPTG…VLTVLLLPIR (79 aa)) lie on the Cytoplasmic side of the membrane. A helical; Signal-anchor for type II membrane protein membrane pass occupies residues 80–100 (VVGCVLSLISAWMFACIGLYG). Topologically, residues 101 to 533 (MTLDDLKAKP…PKAVVTTAEN (433 aa)) are lumenal. The short motif at 158–163 (HSSYVD) is the HXXXXD motif element. 3 consecutive EF-hand domains span residues 402-437 (LKNT…CKLK), 439-474 (SDLL…AGGK), and 475-510 (LNEQ…QKSS).

It belongs to the 1-acyl-sn-glycerol-3-phosphate acyltransferase family.

The protein resides in the endoplasmic reticulum membrane. The protein localises to the golgi apparatus membrane. It is found in the lipid droplet. The enzyme catalyses a 1-acyl-sn-glycero-3-phosphocholine + an acyl-CoA = a 1,2-diacyl-sn-glycero-3-phosphocholine + CoA. It functions in the pathway lipid metabolism; phospholipid metabolism. In terms of biological role, acetyltransferase which mediates the conversion of 1-acyl-sn-glycero-3-phosphocholine (LPC) into phosphatidylcholine (PC). Has a calcium-independent activity. Displays a clear preference for saturated fatty acyl-CoAs, and 1-myristoyl or 1-palmitoyl LPC as acyl donors and acceptors, respectively. Involved in the regulation of lipid droplet number and size. The protein is Lysophosphatidylcholine acyltransferase of Drosophila melanogaster (Fruit fly).